The chain runs to 290 residues: 4-hydroxy-3-methylbut-2-enyl diphosphate reductase (290 aa).

Cys-12 provides a ligand contact to [4Fe-4S] cluster. His-50 and His-83 together coordinate (2E)-4-hydroxy-3-methylbut-2-enyl diphosphate. Positions 50 and 83 each coordinate dimethylallyl diphosphate. His-50 and His-83 together coordinate isopentenyl diphosphate. Cys-105 lines the [4Fe-4S] cluster pocket. His-133 is a binding site for (2E)-4-hydroxy-3-methylbut-2-enyl diphosphate. A dimethylallyl diphosphate-binding site is contributed by His-133. Position 133 (His-133) interacts with isopentenyl diphosphate. Catalysis depends on Glu-135, which acts as the Proton donor. Thr-173 is a binding site for (2E)-4-hydroxy-3-methylbut-2-enyl diphosphate. Cys-202 contributes to the [4Fe-4S] cluster binding site. Positions 230, 232, and 274 each coordinate (2E)-4-hydroxy-3-methylbut-2-enyl diphosphate. Dimethylallyl diphosphate contacts are provided by Ser-230, Asn-232, and Ser-274. Residues Ser-230, Asn-232, and Ser-274 each coordinate isopentenyl diphosphate.

This sequence belongs to the IspH family. [4Fe-4S] cluster serves as cofactor.

The catalysed reaction is isopentenyl diphosphate + 2 oxidized [2Fe-2S]-[ferredoxin] + H2O = (2E)-4-hydroxy-3-methylbut-2-enyl diphosphate + 2 reduced [2Fe-2S]-[ferredoxin] + 2 H(+). It catalyses the reaction dimethylallyl diphosphate + 2 oxidized [2Fe-2S]-[ferredoxin] + H2O = (2E)-4-hydroxy-3-methylbut-2-enyl diphosphate + 2 reduced [2Fe-2S]-[ferredoxin] + 2 H(+). It participates in isoprenoid biosynthesis; dimethylallyl diphosphate biosynthesis; dimethylallyl diphosphate from (2E)-4-hydroxy-3-methylbutenyl diphosphate: step 1/1. Its pathway is isoprenoid biosynthesis; isopentenyl diphosphate biosynthesis via DXP pathway; isopentenyl diphosphate from 1-deoxy-D-xylulose 5-phosphate: step 6/6. Catalyzes the conversion of 1-hydroxy-2-methyl-2-(E)-butenyl 4-diphosphate (HMBPP) into a mixture of isopentenyl diphosphate (IPP) and dimethylallyl diphosphate (DMAPP). Acts in the terminal step of the DOXP/MEP pathway for isoprenoid precursor biosynthesis. In Nitratidesulfovibrio vulgaris (strain DP4) (Desulfovibrio vulgaris), this protein is 4-hydroxy-3-methylbut-2-enyl diphosphate reductase.